The following is a 1342-amino-acid chain: MVYSYTEKKRIRKDFGKRPQVLDIPYLLSIQLDSFQKFIEQDPEGQYGLEAAFRSVFPIKSYSGNSELQYVSYRLGEPVFDVQECQIRGVTYSAPLRVKLRLVVYEREAPEGTVKDIKEQEVYMGEIPLMTDNGTFVINGTERVIVSQLHRSPGVFFDSDKGKTHSSGKVLYNARIIPYRGSWLDFEFDPKDNLFVRIDRRRKLPATIILRALQYTTEQILDLFFEKVIFEIRDNKLQMELLPERLRGETASFDIEFDGKVYVEKGRRITARHIRQLEKDDIKLIEVPVEYIAGKVAAKDYVDASTGELICPANMELSLDLLAKLSQSGHKRIETLFTNDLDHGAYMSETIRVDPTSDRLSALVEIYRMMRPGEPPTREAAENLFENLFFSEDRYDLSAVGRMKFNRSLLRDAIEGSGILSKEDIIEVMKKLIDIRNGKGEVDDIDHLGNRRIRSVGEMAENQFRVGLVRVERAVKERLSLGDLDTLMPQDMINAKPISAAVKEFFGSSQLSQFMDQNNPLSEITHKRRISALGPGGLTRERAGFEVRDVHPTHYGRVCPIETPEGPNIGLINSLSVYAQTNEYGFLETPYRKVTDGVVTDEIHYLSAIEEGNYVIAQANTNLDEEGRFVDDLVTCRSKGESSLFSNDQVDYMDVSTQQIVSVGASLIPFLEHDDANRALMGANMQRQAVPTLRADKPLVGTGMERAVAVDSGVTAVAKRGGTVQYVDASRIVIKVNEDEMYPGEAGIDIYNLTKYTRSNQNTCINQMPCVSLGEPVERGDVLADGPSTDLGELALGQNMRVAFMPWNGYNFEDSILVSERVVQEDRFTTIHIQELACVSRDTKLGPEEITADIPNVGEAALSKLDESGIVYIGAEVTGGDILVGKVTPKGETQLTPEEKLLRAIFGEKASDVKDSSLRVPNGVSGTIIDVQVFTRDGVEKDKRALEIEEMQLKQAKKDLSEELQILEAGLFSRIYAVLVSGGVEAEKLDKLPRDRWLELGLTDEEKQNQLEQLAEQYDELKHEFEKKLEAKRRKITQGDDLAPGVLKIVKVYLAVKRQIQPGDKMAGRHGNKGVISKINPIEDMPHDANGTPVDIVLNPLGVPSRMNIGQILETHLGMAAKGIGEKINAMLKQQEEVAKLREFIQRAYDLGTDVRQKVDLNTFSDDEVLRLAENLKKGMPIATPVFDGAKESEIKELLQLGGLPTSGQITLFDGRTGEQFERQVTVGYMYMLKLNHLVDDKMHARSTGSYSLVTQQPLGGKAQFGGQRFGEMEVWALEAYGAAYTLQEMLTVKSDDVNGRTKMYKNIVDGNHQMEPGMPESFNVLLKEIRSLGINIELEDE.

The protein belongs to the RNA polymerase beta chain family. In terms of assembly, the RNAP catalytic core consists of 2 alpha, 1 beta, 1 beta' and 1 omega subunit. When a sigma factor is associated with the core the holoenzyme is formed, which can initiate transcription.

It carries out the reaction RNA(n) + a ribonucleoside 5'-triphosphate = RNA(n+1) + diphosphate. Its function is as follows. DNA-dependent RNA polymerase catalyzes the transcription of DNA into RNA using the four ribonucleoside triphosphates as substrates. The protein is DNA-directed RNA polymerase subunit beta of Enterobacter sp. (strain 638).